The chain runs to 81 residues: Cytotoxin I-like P-15 (81 aa).

The N-terminal stretch at 1–21 (MKTLLLTLAAATIVCLDLGYT) is a signal peptide. 4 disulfides stabilise this stretch: cysteine 24/cysteine 42, cysteine 35/cysteine 59, cysteine 63/cysteine 74, and cysteine 75/cysteine 80.

Belongs to the three-finger toxin family. Short-chain subfamily. Type IA cytotoxin sub-subfamily. In terms of assembly, monomer in solution; Homodimer and oligomer in the presence of negatively charged lipids forming a pore with a size ranging between 20 and 30 Angstroms. In terms of tissue distribution, expressed by the venom gland.

The protein localises to the secreted. It is found in the target cell membrane. Its function is as follows. Shows cytolytic activity on many different cells by forming pore in lipid membranes. In vivo, increases heart rate or kills the animal by cardiac arrest. In addition, it binds to heparin with high affinity, interacts with Kv channel-interacting protein 1 (KCNIP1) in a calcium-independent manner, and binds to integrin alpha-V/beta-3 (ITGAV/ITGB3) with moderate affinity. This Naja atra (Chinese cobra) protein is Cytotoxin I-like P-15.